We begin with the raw amino-acid sequence, 159 residues long: uncharacterized protein (159 aa).

Residues 7–151 (LLINYKTLEE…NPLIWEPAHI (145 aa)) form the N-acetyltransferase domain.

This is an uncharacterized protein from Bacillus pumilus (strain SAFR-032).